The chain runs to 362 residues: Probable dual-specificity RNA methyltransferase RlmN (362 aa).

The Proton acceptor role is filled by Glu105. Residues 111–344 enclose the Radical SAM core domain; the sequence is HEYGNSICVT…VTIRREQGHD (234 aa). A disulfide bridge links Cys118 with Cys349. Residues Cys125, Cys129, and Cys132 each coordinate [4Fe-4S] cluster. Residues 175-176, Ser207, 230-232, and Asn306 each bind S-adenosyl-L-methionine; these read GE and SLH. The active-site S-methylcysteine intermediate is the Cys349.

It belongs to the radical SAM superfamily. RlmN family. It depends on [4Fe-4S] cluster as a cofactor.

It localises to the cytoplasm. The catalysed reaction is adenosine(2503) in 23S rRNA + 2 reduced [2Fe-2S]-[ferredoxin] + 2 S-adenosyl-L-methionine = 2-methyladenosine(2503) in 23S rRNA + 5'-deoxyadenosine + L-methionine + 2 oxidized [2Fe-2S]-[ferredoxin] + S-adenosyl-L-homocysteine. It catalyses the reaction adenosine(37) in tRNA + 2 reduced [2Fe-2S]-[ferredoxin] + 2 S-adenosyl-L-methionine = 2-methyladenosine(37) in tRNA + 5'-deoxyadenosine + L-methionine + 2 oxidized [2Fe-2S]-[ferredoxin] + S-adenosyl-L-homocysteine. Specifically methylates position 2 of adenine 2503 in 23S rRNA and position 2 of adenine 37 in tRNAs. The polypeptide is Probable dual-specificity RNA methyltransferase RlmN (Bacillus mycoides (strain KBAB4) (Bacillus weihenstephanensis)).